The sequence spans 292 residues: Ubiquinone biosynthesis protein UbiV (292 aa).

Residues Cys39, Cys180, Cys193, and Cys197 each contribute to the [4Fe-4S] cluster site.

This sequence belongs to the peptidase U32 family. UbiV subfamily. In terms of assembly, forms a heterodimer with UbiU. [4Fe-4S] cluster is required as a cofactor.

The protein operates within cofactor biosynthesis; ubiquinone biosynthesis. Required for O(2)-independent ubiquinone (coenzyme Q) biosynthesis. Together with UbiU, is essential for the C6-hydroxylation reaction in the oxygen-independent ubiquinone biosynthesis pathway. The protein is Ubiquinone biosynthesis protein UbiV of Escherichia coli (strain K12).